Here is a 313-residue protein sequence, read N- to C-terminus: Protein-methionine-sulfoxide reductase catalytic subunit MsrP (313 aa).

The tat-type signal signal peptide spans methionine 1–alanine 44. Mo-molybdopterin contacts are provided by residues asparagine 76, tyrosine 79–glutamate 80, cysteine 134, threonine 169, asparagine 217, arginine 222, and glycine 233–lysine 235.

Belongs to the MsrP family. Heterodimer of a catalytic subunit (MsrP) and a heme-binding subunit (MsrQ). It depends on Mo-molybdopterin as a cofactor. In terms of processing, predicted to be exported by the Tat system. The position of the signal peptide cleavage has not been experimentally proven.

It localises to the periplasm. It catalyses the reaction L-methionyl-[protein] + a quinone + H2O = L-methionyl-(S)-S-oxide-[protein] + a quinol. The enzyme catalyses L-methionyl-[protein] + a quinone + H2O = L-methionyl-(R)-S-oxide-[protein] + a quinol. Functionally, part of the MsrPQ system that repairs oxidized periplasmic proteins containing methionine sulfoxide residues (Met-O), using respiratory chain electrons. Thus protects these proteins from oxidative-stress damage caused by reactive species of oxygen and chlorine generated by the host defense mechanisms. MsrPQ is essential for the maintenance of envelope integrity under bleach stress, rescuing a wide series of structurally unrelated periplasmic proteins from methionine oxidation. The catalytic subunit MsrP is non-stereospecific, being able to reduce both (R-) and (S-) diastereoisomers of methionine sulfoxide. This Anaeromyxobacter dehalogenans (strain 2CP-1 / ATCC BAA-258) protein is Protein-methionine-sulfoxide reductase catalytic subunit MsrP.